The sequence spans 146 residues: D-aminoacyl-tRNA deacylase (146 aa).

Positions 138 to 139 match the Gly-cisPro motif, important for rejection of L-amino acids motif; that stretch reads GP.

This sequence belongs to the DTD family. In terms of assembly, homodimer.

The protein resides in the cytoplasm. The catalysed reaction is glycyl-tRNA(Ala) + H2O = tRNA(Ala) + glycine + H(+). It catalyses the reaction a D-aminoacyl-tRNA + H2O = a tRNA + a D-alpha-amino acid + H(+). Functionally, an aminoacyl-tRNA editing enzyme that deacylates mischarged D-aminoacyl-tRNAs. Also deacylates mischarged glycyl-tRNA(Ala), protecting cells against glycine mischarging by AlaRS. Acts via tRNA-based rather than protein-based catalysis; rejects L-amino acids rather than detecting D-amino acids in the active site. By recycling D-aminoacyl-tRNA to D-amino acids and free tRNA molecules, this enzyme counteracts the toxicity associated with the formation of D-aminoacyl-tRNA entities in vivo and helps enforce protein L-homochirality. The protein is D-aminoacyl-tRNA deacylase of Tolumonas auensis (strain DSM 9187 / NBRC 110442 / TA 4).